We begin with the raw amino-acid sequence, 269 residues long: Putative pyruvate, phosphate dikinase regulatory protein (269 aa).

151 to 158 lines the ADP pocket; that stretch reads GVSRSSKT.

It belongs to the pyruvate, phosphate/water dikinase regulatory protein family. PDRP subfamily.

It carries out the reaction N(tele)-phospho-L-histidyl/L-threonyl-[pyruvate, phosphate dikinase] + ADP = N(tele)-phospho-L-histidyl/O-phospho-L-threonyl-[pyruvate, phosphate dikinase] + AMP + H(+). It catalyses the reaction N(tele)-phospho-L-histidyl/O-phospho-L-threonyl-[pyruvate, phosphate dikinase] + phosphate + H(+) = N(tele)-phospho-L-histidyl/L-threonyl-[pyruvate, phosphate dikinase] + diphosphate. Bifunctional serine/threonine kinase and phosphorylase involved in the regulation of the pyruvate, phosphate dikinase (PPDK) by catalyzing its phosphorylation/dephosphorylation. In Geobacter metallireducens (strain ATCC 53774 / DSM 7210 / GS-15), this protein is Putative pyruvate, phosphate dikinase regulatory protein.